An 86-amino-acid chain; its full sequence is Omega-theraphotoxin-Hhn1f 1 (86 aa).

The signal sequence occupies residues 1–21 (MKSIVFVALFGLALLAVVCSA). The propeptide occupies 22 to 50 (SEDAHKELLKEVVRAMVVDKTDAVQAEER). 3 disulfide bridges follow: Cys-52–Cys-66, Cys-59–Cys-71, and Cys-65–Cys-78.

This sequence belongs to the neurotoxin 10 (Hwtx-1) family. 17 (Hntx-9) subfamily. Expressed by the venom gland.

The protein localises to the secreted. In terms of biological role, ion channel inhibitor. In Cyriopagopus hainanus (Chinese bird spider), this protein is Omega-theraphotoxin-Hhn1f 1.